A 75-amino-acid chain; its full sequence is ATP synthase subunit c (75 aa).

2 consecutive transmembrane segments (helical) span residues 8 to 28 (FIAI…IANI) and 52 to 72 (IGAA…MLLI).

The protein belongs to the ATPase C chain family. In terms of assembly, F-type ATPases have 2 components, F(1) - the catalytic core - and F(0) - the membrane proton channel. F(1) has five subunits: alpha(3), beta(3), gamma(1), delta(1), epsilon(1). F(0) has three main subunits: a(1), b(2) and c(10-14). The alpha and beta chains form an alternating ring which encloses part of the gamma chain. F(1) is attached to F(0) by a central stalk formed by the gamma and epsilon chains, while a peripheral stalk is formed by the delta and b chains.

Its subcellular location is the cell membrane. Functionally, f(1)F(0) ATP synthase produces ATP from ADP in the presence of a proton or sodium gradient. F-type ATPases consist of two structural domains, F(1) containing the extramembraneous catalytic core and F(0) containing the membrane proton channel, linked together by a central stalk and a peripheral stalk. During catalysis, ATP synthesis in the catalytic domain of F(1) is coupled via a rotary mechanism of the central stalk subunits to proton translocation. Its function is as follows. Key component of the F(0) channel; it plays a direct role in translocation across the membrane. A homomeric c-ring of between 10-14 subunits forms the central stalk rotor element with the F(1) delta and epsilon subunits. The chain is ATP synthase subunit c from Wolbachia pipientis wMel.